The primary structure comprises 240 residues: MSTATRSVAPRAHVLVAVKELHAAKTRLSGVFDTDDRTGLVLSMLRDTLAVVSDVATVVGVTVVTPDPAVARLARSVGAHVYADPAPVAAGDPADEGGTEHGLNAALAAAAEHVRRNESGVDVVALQADLPSLRGGEFGEALAAARTGGRSVVVDHHGTGTAALFSCDPEVPLDPRFGPGSAKRHLESGARPLDGHWPGLRTDVDTADDLDAAQALGVGPATRAALDALEHSAPSHCGNE.

Phosphoenolpyruvate is bound by residues T161, G178, and S181.

The protein belongs to the CofC family.

It catalyses the reaction phosphoenolpyruvate + GTP + H(+) = enolpyruvoyl-2-diphospho-5'-guanosine + diphosphate. Its pathway is cofactor biosynthesis; coenzyme F420 biosynthesis. In terms of biological role, guanylyltransferase that catalyzes the activation of phosphoenolpyruvate (PEP) as enolpyruvoyl-2-diphospho-5'-guanosine, via the condensation of PEP with GTP. It is involved in the biosynthesis of coenzyme F420, a hydride carrier cofactor. This is Phosphoenolpyruvate guanylyltransferase from Rhodococcus opacus (strain B4).